The primary structure comprises 687 residues: Adhesion G-protein coupled receptor G1 (687 aa).

Residues 1-25 form the signal peptide; it reads MTAQSLLQTTLFLLSLLFLVQGAHG. A heparin-binding site is contributed by 26–33; sequence RGHREDFR. Topologically, residues 26-402 are extracellular; sequence RGHREDFRFC…VEVDAVHKHY (377 aa). Intrachain disulfides connect cysteine 35/cysteine 91 and cysteine 121/cysteine 177. N-linked (GlcNAc...) asparagine glycans are attached at residues asparagine 39, asparagine 148, and asparagine 171. 190–200 is a binding site for heparin; that stretch reads LKHPQKASRRP. The 172-residue stretch at 224 to 395 folds into the GAIN-B domain; sequence DTVSFEEDRI…AVLMVSSVEV (172 aa). N-linked (GlcNAc...) asparagine glycans are attached at residues asparagine 234, asparagine 303, asparagine 324, and asparagine 341. 2 disulfides stabilise this stretch: cysteine 346–cysteine 377 and cysteine 366–cysteine 379. Residues 346 to 395 are GPS; it reads CVFWVEDPTLSSPGHWSSAGCETVRRETQTSCFCNHLTYFAVLMVSSVEV. Residues 384 to 397 are stachel; the sequence is YFAVLMVSSVEVDA. Residues 403–423 traverse the membrane as a helical segment; that stretch reads LSLLSYVGCVVSALACIVTIA. Residues 424–442 lie on the Cytoplasmic side of the membrane; that stretch reads AYLCSRRKPRDYTIKVHMN. Residues 443-463 form a helical membrane-spanning segment; the sequence is LLLAVFLLDTSFLLSEPVALT. Over 464 to 470 the chain is Extracellular; sequence GSEAGCR. A helical transmembrane segment spans residues 471–491; the sequence is ASAIFLHFSLLACLSWMGLEG. Residues 492 to 512 lie on the Cytoplasmic side of the membrane; the sequence is YNLYRLVVEVFGTYVPGYLLK. The chain crosses the membrane as a helical span at residues 513–533; sequence LSAMGWGFPIFLVTLVALVDV. Residues 534–570 lie on the Extracellular side of the membrane; it reads DNYGPIILAVHRTPEGVIYPSMCWIRDSLVSYITNLG. Residues 571 to 591 traverse the membrane as a helical segment; sequence LFSLVFLFNMAMLATMVVQIL. Over 592–603 the chain is Cytoplasmic; that stretch reads RLRPHTQKWSHV. Residues 604 to 624 form a helical membrane-spanning segment; sequence LTLLGLSLVLGLPWALIFFSF. The Extracellular portion of the chain corresponds to 625-630; that stretch reads ASGTFQ. The helical transmembrane segment at 631-651 threads the bilayer; the sequence is LVVLYLFSIITSFQGFLIFIW. Topologically, residues 652–687 are cytoplasmic; sequence YWSMRLQARGGPSPLKSNSDSARLPISSGSTSSSRI. The interval 664–687 is disordered; that stretch reads SPLKSNSDSARLPISSGSTSSSRI. Low complexity predominate over residues 678–687; that stretch reads SSGSTSSSRI.

Belongs to the G-protein coupled receptor 2 family. LN-TM7 subfamily. In terms of assembly, heterodimer of 2 chains generated by proteolytic processing; the large extracellular N-terminal fragment (ADGRG1 NT) and the membrane-bound C-terminal fragment (ADGRG1-CT) predominantly remain associated and non-covalently linked. ADGRG1 NT self-associates in a trans-trans manner; the homophilic interaction enhances receptor signaling. Interacts with TGM2. Interacts with heparin; leading to the reduction of ADGRG1 shedding. Interacts with COL3A1. Part of a GPCR-tetraspanin complex at least consisting of ADGRG1, CD81, eventually CD9, and GNA11 in which CD81 is enhancing the association of ADGRG1 with GNA11. Post-translationally, autoproteolytically cleaved into 2 fragments; the large extracellular N-terminal fragment (ADGRG1 NT) and the membrane-bound C-terminal fragment (ADGRG1 CT) predominantly remain associated and non-covalently linked. Shedding to yield the secreted ADGRG1 N-terminal fragment seems to involve metalloprotease(s). Ubiquitinated. Undergoes polyubiquitination upon activation.

The protein localises to the cell membrane. The protein resides in the secreted. It localises to the membrane raft. With respect to regulation, forms a heterodimer of 2 chains generated by proteolytic processing that remain associated through non-covalent interactions mediated by the GAIN-B domain. In the inactivated receptor, the Stachel sequence (also named stalk) is embedded in the GAIN-B domain, where it adopts a beta-strand conformation. On activation, the Stachel moves into the 7 transmembrane region and adopts a twisted hook-shaped configuration that forms contacts within the receptor, leading to coupling of a G-alpha protein, which activates signaling. The cleaved GAIN-B and N-terminal domains can then dissociate from the rest of the receptor. In terms of biological role, adhesion G-protein coupled receptor (aGPCR) for steroid hormone 17alpha-hydroxypregnenolone (17-OH), which is involved in cell adhesion and cell-cell interactions. Ligand binding causes a conformation change that triggers signaling via guanine nucleotide-binding proteins (G proteins) and modulates the activity of downstream effectors, such as RhoA pathway. ADGRG1 is coupled to G(12) and/or G(13) G proteins (GNA12 and GNA13, respectively) and mediates the activation Rho small GTPases. Acts as a potent suppressor of ferroptosis: binding to 17-OH-binding initiates signaling that down-regulates CD36 and alleviates ferroptosis-induced liver injury. Ligand-binding also induces cell adhesion activity via association with proteins such as collagen III/COL3A1 and TGM2. Mediates cell matrix adhesion in developing neurons and hematopoietic stem cells. Involved in cortical development, specifically in maintenance of the pial basement membrane integrity and in cortical lamination: association with COL3A1 in the developing brain inhibits neuronal migration via activation of the RhoA pathway. Together with TGM2, acts as a regulator of myelination and myelin repair in oligodendrocyte precursor cells. Acts as a hemostatic sensor of shear force: G protein-coupled receptor signaling is activated in response to shear force in platelets, promoting G(13) G protein signaling, and platelet shape change and aggregation in a COL3A1-dependent manner. Acts as an inhibitor of VEGFA production thereby inhibiting angiogenesis through a signaling pathway mediated by PRKCA. Plays a role in the maintenance of hematopoietic stem cells in bone marrow niche. Plays an essential role in testis development. In Gorilla gorilla gorilla (Western lowland gorilla), this protein is Adhesion G-protein coupled receptor G1 (ADGRG1).